Here is a 236-residue protein sequence, read N- to C-terminus: Phosphoribosylaminoimidazole-succinocarboxamide synthase (236 aa).

This sequence belongs to the SAICAR synthetase family.

It carries out the reaction 5-amino-1-(5-phospho-D-ribosyl)imidazole-4-carboxylate + L-aspartate + ATP = (2S)-2-[5-amino-1-(5-phospho-beta-D-ribosyl)imidazole-4-carboxamido]succinate + ADP + phosphate + 2 H(+). It participates in purine metabolism; IMP biosynthesis via de novo pathway; 5-amino-1-(5-phospho-D-ribosyl)imidazole-4-carboxamide from 5-amino-1-(5-phospho-D-ribosyl)imidazole-4-carboxylate: step 1/2. This is Phosphoribosylaminoimidazole-succinocarboxamide synthase from Rickettsia akari (strain Hartford).